Consider the following 307-residue polypeptide: Ribosomal RNA small subunit methyltransferase H (307 aa).

Residues 31–33 (GGH), Asp-51, Tyr-83, Asp-97, and Gln-104 contribute to the S-adenosyl-L-methionine site.

It belongs to the methyltransferase superfamily. RsmH family.

The protein resides in the cytoplasm. It carries out the reaction cytidine(1402) in 16S rRNA + S-adenosyl-L-methionine = N(4)-methylcytidine(1402) in 16S rRNA + S-adenosyl-L-homocysteine + H(+). Specifically methylates the N4 position of cytidine in position 1402 (C1402) of 16S rRNA. This is Ribosomal RNA small subunit methyltransferase H from Buchnera aphidicola subsp. Cinara cedri (strain Cc).